A 298-amino-acid polypeptide reads, in one-letter code: Inosose dehydratase (298 aa).

This sequence belongs to the IolE/MocC family. It depends on glutathione as a cofactor. Co(2+) serves as cofactor. Requires Mn(2+) as cofactor.

The catalysed reaction is scyllo-inosose = 3D-3,5/4-trihydroxycyclohexane-1,2-dione + H2O. Its pathway is polyol metabolism; myo-inositol degradation into acetyl-CoA; acetyl-CoA from myo-inositol: step 2/7. In terms of biological role, catalyzes the dehydration of inosose (2-keto-myo-inositol, 2KMI or 2,4,6/3,5-pentahydroxycyclohexanone) to 3D-(3,5/4)-trihydroxycyclohexane-1,2-dione (D-2,3-diketo-4-deoxy-epi-inositol). This chain is Inosose dehydratase, found in Clostridium beijerinckii (strain ATCC 51743 / NCIMB 8052) (Clostridium acetobutylicum).